The chain runs to 509 residues: ATP synthase subunit alpha (509 aa).

Residue G169–T176 participates in ATP binding.

The protein belongs to the ATPase alpha/beta chains family. As to quaternary structure, F-type ATPases have 2 components, CF(1) - the catalytic core - and CF(0) - the membrane proton channel. CF(1) has five subunits: alpha(3), beta(3), gamma(1), delta(1), epsilon(1). CF(0) has three main subunits: a(1), b(2) and c(9-12). The alpha and beta chains form an alternating ring which encloses part of the gamma chain. CF(1) is attached to CF(0) by a central stalk formed by the gamma and epsilon chains, while a peripheral stalk is formed by the delta and b chains.

It is found in the cell inner membrane. It carries out the reaction ATP + H2O + 4 H(+)(in) = ADP + phosphate + 5 H(+)(out). In terms of biological role, produces ATP from ADP in the presence of a proton gradient across the membrane. The alpha chain is a regulatory subunit. The sequence is that of ATP synthase subunit alpha from Methylobacterium sp. (strain 4-46).